Reading from the N-terminus, the 71-residue chain is Heat-stable enterotoxin B (71 aa).

Positions methionine 1–glycine 19 are cleaved as a signal peptide. A propeptide spanning residues glutamine 20–serine 52 is cleaved from the precursor. 3 disulfide bridges follow: cysteine 59–cysteine 64, cysteine 60–cysteine 68, and cysteine 63–cysteine 71.

This sequence belongs to the heat-stable enterotoxin family.

The protein localises to the secreted. Toxin which activates the particulate form of guanylate cyclase and increases cyclic GMP levels within the host intestinal epithelial cells. Could play an important role in pathogenesis. The polypeptide is Heat-stable enterotoxin B (ystB) (Yersinia enterocolitica).